Reading from the N-terminus, the 287-residue chain is MNFFCKEKRQAYVELMRINKPIGTLLLLWPTLWALWIAAQGFPDLGVLIVFSAGVFLMRSAGCVINDFADRNIDGFVERTKHRPLPSGRATSTEAIILFFILAIVSFLLVLTQNSLTIQLSFAGLLLAFAYPFMKRFTQLPQLVLGLAFSWSIPMAFAAQANALPAVVWIIFAVNIIWTIAYDTLYAMVDREDDLKIGVKSTAILFASNDKIIIALLQLTSLILLSLLGWLEDLNWIYFIALLVVGGLFLRQQLQIKNREKTACFKAFLDNNYVGFVIFAGLFLGYL.

A run of 9 helical transmembrane segments spans residues 22–42 (IGTLLLLWPTLWALWIAAQGF), 45–65 (LGVLIVFSAGVFLMRSAGCVI), 91–111 (TSTEAIILFFILAIVSFLLVL), 114–134 (NSLTIQLSFAGLLLAFAYPFM), 139–159 (QLPQLVLGLAFSWSIPMAFAA), 161–181 (ANALPAVVWIIFAVNIIWTIA), 212–232 (IIIALLQLTSLILLSLLGWLE), 236–256 (WIYFIALLVVGGLFLRQQLQI), and 267–287 (AFLDNNYVGFVIFAGLFLGYL).

The protein belongs to the UbiA prenyltransferase family. The cofactor is Mg(2+).

The protein resides in the cell inner membrane. It carries out the reaction all-trans-octaprenyl diphosphate + 4-hydroxybenzoate = 4-hydroxy-3-(all-trans-octaprenyl)benzoate + diphosphate. The protein operates within cofactor biosynthesis; ubiquinone biosynthesis. Catalyzes the prenylation of para-hydroxybenzoate (PHB) with an all-trans polyprenyl group. Mediates the second step in the final reaction sequence of ubiquinone-8 (UQ-8) biosynthesis, which is the condensation of the polyisoprenoid side chain with PHB, generating the first membrane-bound Q intermediate 3-octaprenyl-4-hydroxybenzoate. This Psychromonas ingrahamii (strain DSM 17664 / CCUG 51855 / 37) protein is 4-hydroxybenzoate octaprenyltransferase.